The following is a 149-amino-acid chain: Deoxyuridine 5'-triphosphate nucleotidohydrolase (149 aa).

Substrate is bound by residues 68-70 (RSG), N81, and 85-87 (LID).

It belongs to the dUTPase family. It depends on Mg(2+) as a cofactor.

It catalyses the reaction dUTP + H2O = dUMP + diphosphate + H(+). It functions in the pathway pyrimidine metabolism; dUMP biosynthesis; dUMP from dCTP (dUTP route): step 2/2. In terms of biological role, this enzyme is involved in nucleotide metabolism: it produces dUMP, the immediate precursor of thymidine nucleotides and it decreases the intracellular concentration of dUTP so that uracil cannot be incorporated into DNA. In Laribacter hongkongensis (strain HLHK9), this protein is Deoxyuridine 5'-triphosphate nucleotidohydrolase.